Reading from the N-terminus, the 287-residue chain is uncharacterized protein (287 aa).

Residues 1–44 (MAAPRNLTGDGGARQLVKDEESPAASSAAKGLLNDDSPTGKRTK) form a disordered region. Serine 37 is subject to Phosphoserine. 5 helical membrane-spanning segments follow: residues 55 to 75 (FAVFFTVFLVFTTGLFCIYLT), 124 to 144 (TFMIPGTIFMSLLAGALFGVV), 147 to 167 (FVLVVLNATAGACSCFFLSKL), 218 to 238 (PIVDIPFHVFFLATLVGLMPA), and 260 to 280 (DFKTLSVLFLIGSISIFPALL).

The protein localises to the membrane. This is an uncharacterized protein from Arabidopsis thaliana (Mouse-ear cress).